A 243-amino-acid polypeptide reads, in one-letter code: Phosphoadenosine 5'-phosphosulfate reductase (243 aa).

Cysteine 239 acts as the Nucleophile; cysteine thiosulfonate intermediate in catalysis.

Belongs to the PAPS reductase family. CysH subfamily.

It localises to the cytoplasm. The catalysed reaction is [thioredoxin]-disulfide + sulfite + adenosine 3',5'-bisphosphate + 2 H(+) = [thioredoxin]-dithiol + 3'-phosphoadenylyl sulfate. The protein operates within sulfur metabolism; hydrogen sulfide biosynthesis; sulfite from sulfate: step 3/3. In terms of biological role, catalyzes the formation of sulfite from phosphoadenosine 5'-phosphosulfate (PAPS) using thioredoxin as an electron donor. The protein is Phosphoadenosine 5'-phosphosulfate reductase of Proteus mirabilis (strain HI4320).